The primary structure comprises 297 residues: MTQLAIIGATASGKSDLAIKIAKKIDAYILSIDSLSIYKEIDIVSAKPSKKELEDIKHFGIDFLHVDDYFSVDIFINLYKEVLQICKEQKKNLIIVGGTSFYLKSLIEGLSAIPKISKEQELHVEIKLKNLQQCYDFLYSLDREYMKNISAKDSYRIEKALLLHVGSSLTPSEWFRQNPPIPVIKNIDIFNIDVSRDILRERILNRTKKMLDLGLIDEVCHLEKKYTRLPHAMNSIGIVETLEYIDGFISKDEMIEKISTHTAQLAKRQQTFNRTQFDTIRSAPLEKLEDIILSTLA.

8 to 15 (GATASGKS) is a binding site for ATP. 10–15 (TASGKS) serves as a coordination point for substrate. Residues 33 to 36 (DSLS) form an interaction with substrate tRNA region.

Belongs to the IPP transferase family. As to quaternary structure, monomer. Mg(2+) serves as cofactor.

It carries out the reaction adenosine(37) in tRNA + dimethylallyl diphosphate = N(6)-dimethylallyladenosine(37) in tRNA + diphosphate. In terms of biological role, catalyzes the transfer of a dimethylallyl group onto the adenine at position 37 in tRNAs that read codons beginning with uridine, leading to the formation of N6-(dimethylallyl)adenosine (i(6)A). The sequence is that of tRNA dimethylallyltransferase from Sulfurimonas denitrificans (strain ATCC 33889 / DSM 1251) (Thiomicrospira denitrificans (strain ATCC 33889 / DSM 1251)).